We begin with the raw amino-acid sequence, 80 residues long: Exodeoxyribonuclease 7 small subunit (80 aa).

Belongs to the XseB family. In terms of assembly, heterooligomer composed of large and small subunits.

The protein resides in the cytoplasm. It carries out the reaction Exonucleolytic cleavage in either 5'- to 3'- or 3'- to 5'-direction to yield nucleoside 5'-phosphates.. Bidirectionally degrades single-stranded DNA into large acid-insoluble oligonucleotides, which are then degraded further into small acid-soluble oligonucleotides. This is Exodeoxyribonuclease 7 small subunit from Rickettsia akari (strain Hartford).